We begin with the raw amino-acid sequence, 251 residues long: Flagellar basal-body rod protein FlgF (251 aa).

The protein belongs to the flagella basal body rod proteins family. The basal body constitutes a major portion of the flagellar organelle and consists of five rings (E,L,P,S, and M) mounted on a central rod. The rod consists of about 26 subunits of FlgG in the distal portion, and FlgB, FlgC and FlgF are thought to build up the proximal portion of the rod with about 6 subunits each.

It localises to the bacterial flagellum basal body. The chain is Flagellar basal-body rod protein FlgF (flgF) from Escherichia coli (strain K12).